A 266-amino-acid chain; its full sequence is Cytochrome c oxidase assembly factor 7 homolog (266 aa).

Sel1-like repeat units lie at residues 32–64 (PEACHLLGDYLEGIKKDFEKASKVYKSTCDDYG) and 66–104 (AKSCYKYGNYSFLGKGKSGSKGNPQVAYEYYEKGCNLND). Residues 166-179 (AVTASSGSGTSSPP) show a composition bias toward low complexity. A disordered region spans residues 166 to 187 (AVTASSGSGTSSPPAGQPPLKD). Residues 212–247 (MYACANLSQMYARGDGIEKNEKEAEKYKKLALEMQD) form a Sel1-like 3 repeat.

This sequence belongs to the hcp beta-lactamase family.

In terms of biological role, required for locomotion. Probably involved in the regulation of formation/maintenance of motor neurons at presynaptic terminals at the neuromuscular junction. The protein is Cytochrome c oxidase assembly factor 7 homolog of Drosophila melanogaster (Fruit fly).